The following is a 148-amino-acid chain: Hemoglobin subunit beta-A (148 aa).

The Globin domain occupies D3–H148. The heme b site is built by H64 and H93.

Belongs to the globin family. Heterotetramer of two alpha chains and two beta chains. In terms of tissue distribution, red blood cells.

Functionally, involved in oxygen transport from gills to the various peripheral tissues. This is Hemoglobin subunit beta-A (hbb1) from Seriola quinqueradiata (Five-ray yellowtail).